A 1185-amino-acid chain; its full sequence is Mucin-6 (1185 aa).

Disulfide bonds link Cys-1-Cys-132 and Cys-23-Cys-168. Residues 1–169 enclose the VWFD 1 domain; that stretch reads CSTWGGGHFS…KMDDPSEICL (169 aa). An N-linked (GlcNAc...) (complex) asparagine glycan is attached at Asn-223. The region spanning 257–312 is the TIL 1 domain; it reads CSANQIYEECGSPCIKTCSNPEYSCSSHCTYGCFCPEGTVLDDISKNRTCVHLEQC. The VWFD 2 domain occupies 350 to 534; sequence GRCSLEGGSF…AMERETDPCA (185 aa). Disulfide bonds link Cys-352–Cys-488 and Cys-374–Cys-533. TIL domains follow at residues 619-676 and 737-782; these read CTGN…KSHC and GATC…PEEC. The VWFD 3 domain maps to 821–993; it reads STCNLYGEGH…NSWKENPLCG (173 aa). Intrachain disulfides connect Cys-823–Cys-957, Cys-845–Cys-992, Cys-854–Cys-954, and Cys-872–Cys-879. The N-linked (GlcNAc...) (complex) asparagine glycan is linked to Asn-930. A compositionally biased stretch (low complexity) spans 1160-1178; that stretch reads PTATQPTSPSTSSASTVLT. Residues 1160–1185 are disordered; the sequence is PTATQPTSPSTSSASTVLTETTNPPV.

In terms of assembly, multimer; disulfide-linked. In terms of processing, N-glycosylated with N-acetylglucosamine (6.7%), N-acetylgalactosamine (0.6%), galactose (1.8%), mannose (4.6%), N-acetylneuraminic acid (1.0%) and sulfate-containing glycans (0.7%).

It localises to the secreted. Functionally, ovomucin, the glycoprotein responsible for the gel properties of egg white, is composed for 2 subunits, alpha-ovomucin/MUC5B and beta-ovomucin/MUC6. The polypeptide is Mucin-6 (MUC6) (Gallus gallus (Chicken)).